Consider the following 448-residue polypeptide: Ribosomal protein uS12 methylthiotransferase RimO (448 aa).

Positions 6 to 116 constitute an MTTase N-terminal domain; that stretch reads PKVGIVSLGC…VVEAVHAAIP (111 aa). Residues C15, C51, C80, C147, C151, and C154 each coordinate [4Fe-4S] cluster. The Radical SAM core domain maps to 133–371; sequence LTPHHYAYLK…EAARQIADER (239 aa). One can recognise a TRAM domain in the interval 373–439; it reads AAKEGTRIEV…DYDLWGDVVE (67 aa).

It belongs to the methylthiotransferase family. RimO subfamily. [4Fe-4S] cluster is required as a cofactor.

It localises to the cytoplasm. It carries out the reaction L-aspartate(89)-[ribosomal protein uS12]-hydrogen + (sulfur carrier)-SH + AH2 + 2 S-adenosyl-L-methionine = 3-methylsulfanyl-L-aspartate(89)-[ribosomal protein uS12]-hydrogen + (sulfur carrier)-H + 5'-deoxyadenosine + L-methionine + A + S-adenosyl-L-homocysteine + 2 H(+). In terms of biological role, catalyzes the methylthiolation of an aspartic acid residue of ribosomal protein uS12. This is Ribosomal protein uS12 methylthiotransferase RimO from Paramagnetospirillum magneticum (strain ATCC 700264 / AMB-1) (Magnetospirillum magneticum).